We begin with the raw amino-acid sequence, 424 residues long: MAANSGLDSKVEYYRLQENEIISAVSSEDADQNDAGFRLSTIHLHLFHGLKFAALLFTVVPVFIILDSMKIIFQRKRRFCLDHVNRSFLRQSSWILDERICQYVLNPLFVCLYPSTFSSPTYVKCNIPIEDQKSPENNIFQDHQLNAPKIVSTKFYQYVMPEGFDPTTDPVLVFYHGGGYALKLTPTSFSFLNNMRNAFPKMAILVPDYTVTATDDQSKKYPLQILQNVAIFDYVVKTMGCKNVVIMGDSAGGNAVLNIVLYLRKCHREIYPKKVIAISPWANATFFHEGEKEYMQGTQEWDGLCLKSHSMFGRMFVGNNPNVDFTSDPFVNIEKNFETKMWQDILKKCSVMITYGSDELLSFQNKILAKKMSDASEGCNHFTAKNVLVEHQGYHTGPILNYSRNMDRWTNIPSIARILEFMQS.

N-acetylalanine is present on Ala2. The Cytoplasmic segment spans residues 2 to 45 (AANSGLDSKVEYYRLQENEIISAVSSEDADQNDAGFRLSTIHLH). Residues 46–66 (LFHGLKFAALLFTVVPVFIIL) form a helical; Signal-anchor for type II membrane protein membrane-spanning segment. Topologically, residues 67 to 424 (DSMKIIFQRK…IARILEFMQS (358 aa)) are lumenal. An N-linked (GlcNAc...) asparagine glycan is attached at Asn85. Positions 176–178 (HGG) match the Involved in the stabilization of the negatively charged intermediate by the formation of the oxyanion hole motif. Ser250 is an active-site residue. N-linked (GlcNAc...) asparagine glycosylation is present at Asn283. His395 is a catalytic residue. N-linked (GlcNAc...) asparagine glycosylation occurs at Asn401.

Belongs to the 'GDXG' lipolytic enzyme family.

The protein resides in the endoplasmic reticulum membrane. In terms of biological role, required for the deacetylation of acetylated sterols. Involved in the resistance to eugenol and pregnenolone toxicity. The chain is Steryl acetyl hydrolase 1 (SAY1) from Saccharomyces cerevisiae (strain ATCC 204508 / S288c) (Baker's yeast).